The primary structure comprises 546 residues: Cytochrome P450 monooxygenase alnH (546 aa).

Residues 11-31 traverse the membrane as a helical segment; sequence VPYSVPLLGSTVVILIGFIAI. Residues asparagine 146, asparagine 258, and asparagine 425 are each glycosylated (N-linked (GlcNAc...) asparagine). Cysteine 445 lines the heme pocket.

This sequence belongs to the cytochrome P450 family. It depends on heme as a cofactor.

Its subcellular location is the membrane. It participates in polyketide biosynthesis. In terms of biological role, cytochrome P450 monooxygenase; part of the gene cluster that mediates the biosynthesis of asperlin, a polyketide showing anti-inflammatory, antitumor and antibiotic activities. The first step of the asperlin biosynthesis is the production of the intermediate 2,4,6-octatrienoic acid by the highly redusing polyketide synthase alnA with cleavage of the PKS product by the esterase alnB. 2,4,6-octatrienoic acid is further converted to asperlin via several steps involving the remaining enzymes from the cluster. This Emericella nidulans (strain FGSC A4 / ATCC 38163 / CBS 112.46 / NRRL 194 / M139) (Aspergillus nidulans) protein is Cytochrome P450 monooxygenase alnH.